The primary structure comprises 259 residues: Ubiquitin-conjugating enzyme E2 J2 (259 aa).

The Cytoplasmic portion of the chain corresponds to 1 to 226 (MSNNSNKRAP…AGLPQANRHH (226 aa)). A UBC core domain is found at 12–162 (TATQRLKQDY…DKVFCELFPE (151 aa)). C94 acts as the Glycyl thioester intermediate in catalysis. The helical; Anchor for type IV membrane protein transmembrane segment at 227-247 (GLLGGALANLFVIVGFAAFAY) threads the bilayer. The Lumenal portion of the chain corresponds to 248–259 (TVKYVLRSIAQE).

This sequence belongs to the ubiquitin-conjugating enzyme family. In terms of assembly, interacts with murid herpesvirus 4 protein K3 (mK3).

It localises to the endoplasmic reticulum membrane. It catalyses the reaction S-ubiquitinyl-[E1 ubiquitin-activating enzyme]-L-cysteine + [E2 ubiquitin-conjugating enzyme]-L-cysteine = [E1 ubiquitin-activating enzyme]-L-cysteine + S-ubiquitinyl-[E2 ubiquitin-conjugating enzyme]-L-cysteine.. It participates in protein modification; protein ubiquitination. Catalyzes the covalent attachment of ubiquitin to other proteins. Seems to function in the selective degradation of misfolded membrane proteins from the endoplasmic reticulum (ERAD). In cooperation with the GATOR2 complex, catalyzes 'Lys-6'-linked ubiquitination of NPRL2. In terms of biological role, in case of infection by the murid herpesvirus 4, its association with the viral E3 ligase K3 mediates ubiquitination of host surface class I (MHC-I) H-2D(b)/H2-D1 and H-2K(b)/H2-K1 molecules before they exit the endoplasmic reticulum, leading to their degradation by the ERAD system, thus blocking the immune detection of virus-infected cells. The complex formed with the murid herpesvirus 4 protein K3 mediates ubiquitination of lysine, as well as serine and threonine residues present in the cytoplasmic tail of surface class I molecules and promotes ubiquitination of hydroxylated serine or threonine residues via ester bonds instead of the classical isopeptide linkage. This is Ubiquitin-conjugating enzyme E2 J2 (Ube2j2) from Mus musculus (Mouse).